Consider the following 475-residue polypeptide: TOM1-like protein 1 (475 aa).

Residues 22–154 enclose the VHS domain; the sequence is ATFAGVQTED…DLLKKGVQFP (133 aa). Residues 155–175 are disordered; sequence PLDGEPETKQEAGQISPSRPT. Polar residues predominate over residues 165–175; the sequence is EAGQISPSRPT. Phosphoserine is present on serine 170. A GAT domain is found at 199-287; that stretch reads EQIGKLHSEL…AILGYERFTR (89 aa). The segment at 296 to 317 is disordered; that stretch reads KRNPTEANQTSSEPSAPSCDLL. Positions 300–310 are enriched in polar residues; the sequence is TEANQTSSEPS. A Phosphoserine modification is found at serine 313. An interaction with GRB2 region spans residues 392–395; sequence YDNF. The SH3-binding signature appears at 421–425; it reads LPPLP. Residues 442–445 form an interaction with PIK3R1 region; sequence YEVM. The residue at position 458 (tyrosine 458) is a Phosphotyrosine. Residues 458 to 461 carry the SH2-binding motif; sequence YEEI.

Belongs to the TOM1 family. Interacts with the SH2 and SH3 domains of FYN when phosphorylated. Also interacts with GRB2 and PIK3R1 when phosphorylated. Interacts with LYN. Post-translationally, phosphorylated on tyrosines by FYN and LYN.

Its subcellular location is the golgi apparatus. It localises to the golgi stack. It is found in the endosome membrane. The protein localises to the cytoplasm. The protein resides in the membrane. Probable adapter protein involved in signaling pathways. Interacts with the SH2 and SH3 domains of various signaling proteins when it is phosphorylated. May promote FYN activation, possibly by disrupting intramolecular SH3-dependent interactions. The sequence is that of TOM1-like protein 1 (Tom1l1) from Rattus norvegicus (Rat).